Reading from the N-terminus, the 207-residue chain is Holliday junction branch migration complex subunit RuvA (207 aa).

The tract at residues 1 to 63 (MISSLRGTVL…EDSLQLFGFS (63 aa)) is domain I. Residues 64–142 (GLEQLQVFEL…ACRRPSAPSA (79 aa)) form a domain II region. The tract at residues 142-146 (ARRPS) is flexible linker. The tract at residues 147–207 (APSSVSDSVL…RLGPANQAAR (61 aa)) is domain III.

It belongs to the RuvA family. As to quaternary structure, homotetramer. Forms an RuvA(8)-RuvB(12)-Holliday junction (HJ) complex. HJ DNA is sandwiched between 2 RuvA tetramers; dsDNA enters through RuvA and exits via RuvB. An RuvB hexamer assembles on each DNA strand where it exits the tetramer. Each RuvB hexamer is contacted by two RuvA subunits (via domain III) on 2 adjacent RuvB subunits; this complex drives branch migration. In the full resolvosome a probable DNA-RuvA(4)-RuvB(12)-RuvC(2) complex forms which resolves the HJ.

Its subcellular location is the cytoplasm. Its function is as follows. The RuvA-RuvB-RuvC complex processes Holliday junction (HJ) DNA during genetic recombination and DNA repair, while the RuvA-RuvB complex plays an important role in the rescue of blocked DNA replication forks via replication fork reversal (RFR). RuvA specifically binds to HJ cruciform DNA, conferring on it an open structure. The RuvB hexamer acts as an ATP-dependent pump, pulling dsDNA into and through the RuvAB complex. HJ branch migration allows RuvC to scan DNA until it finds its consensus sequence, where it cleaves and resolves the cruciform DNA. The sequence is that of Holliday junction branch migration complex subunit RuvA from Leifsonia xyli subsp. xyli (strain CTCB07).